Here is a 1082-residue protein sequence, read N- to C-terminus: Sodium/potassium exporting P-type ATPase 2 (1082 aa).

Topologically, residues 1–75 are cytoplasmic; that stretch reads MSSINTNVAE…GANTLGDGDK (75 aa). Residues 76-96 traverse the membrane as a helical segment; that stretch reads ISLTKIIAHQVCNAMILVLII. Residues 97-98 are Extracellular-facing; sequence SM. A helical membrane pass occupies residues 99-119; that stretch reads VIALAIKDWISGGVIGFVVLI. Over 120–308 the chain is Cytoplasmic; the sequence is NISVGFVQEY…VGTPLQRKLS (189 aa). A helical transmembrane segment spans residues 309–329; that stretch reads WLAIFLFWGCRYFCNYCNGIP. Residues 330–336 are Extracellular-facing; it reads KNRVNKE. Residues 337–357 traverse the membrane as a helical segment; it reads VAIYAICVALSMIPSALIVVL. At 358–807 the chain is on the cytoplasmic side; sequence TITMAVGAQV…RMSSNIQKFV (450 aa). Catalysis depends on Asp-393, which acts as the 4-aspartylphosphate intermediate. Mg(2+) contacts are provided by Asp-393 and Thr-395. Positions 395, 499, 552, 604, 664, 665, 666, 723, and 729 each coordinate ATP. Asp-748 serves as a coordination point for Mg(2+). Residue Asn-751 participates in ATP binding. The helical transmembrane segment at 808–828 threads the bilayer; that stretch reads LQLLAENVAQALYLMVGLAFI. At 829–832 the chain is on the extracellular side; the sequence is DDSG. Residues 833–853 form a helical membrane-spanning segment; it reads LSVFPLSPVEVLWILVVTSCF. Residues 854 to 884 are Cytoplasmic-facing; that stretch reads PAMDLGQERASDDILEESPNSTIFTWEVIID. A helical membrane pass occupies residues 885 to 905; the sequence is MIVYGFWMAVCCLVCFVIIVY. Topologically, residues 906-935 are extracellular; it reads GEGDPYLGVNCNKSSSSNSDVCELVFRGRS. Residues 936–956 form a helical membrane-spanning segment; it reads ASFATMTWCALILAWECIHPY. Residues 957–983 are Cytoplasmic-facing; that stretch reads NSLFYMRQDTDHPWWKQTVIDLWDNQF. A helical membrane pass occupies residues 984-1004; sequence LFWSVAIGFISVFPVVYIPVI. The Extracellular segment spans residues 1005-1007; that stretch reads NTK. A helical transmembrane segment spans residues 1008 to 1028; that stretch reads VFLHGPIGYEWGLAVGFSILF. Over 1029-1082 the chain is Cytoplasmic; that stretch reads LAGSELWKWIKRIHKRKANKKAKNPEYELERSDPFKKYASFSRSNTMDRPELMV.

The protein belongs to the cation transport ATPase (P-type) (TC 3.A.3) family. Type IID subfamily. The cofactor is Mg(2+). The active site is phosphorylated in presence of sodium or potassium and in conditions of higher pH. Not phosphorylated in presence of calcium ions.

It is found in the cell membrane. It catalyses the reaction Na(+)(in) + ATP + H2O = Na(+)(out) + ADP + phosphate + H(+). The catalysed reaction is K(+)(in) + ATP + H2O = K(+)(out) + ADP + phosphate + H(+). Catalyzes the hydrolysis of ATP coupled with the export of sodium and potassium from the cell. May be an inefficient sodium exporter. May transport other cations such as lithium. Sodium/potassium efflux ATPases are involved in salt tolerance and maintaining the membrane potential across the plasma membrane in high salinity (Na+) or alkaline (K+) environments. The protein is Sodium/potassium exporting P-type ATPase 2 of Schwanniomyces occidentalis (Yeast).